Reading from the N-terminus, the 401-residue chain is tRNA(Met) cytidine acetate ligase (401 aa).

Residues 7–20 (IVEYNPFHNGHLYH), Gly-102, Asn-164, and Arg-189 each bind ATP.

It belongs to the TmcAL family.

It localises to the cytoplasm. It carries out the reaction cytidine(34) in elongator tRNA(Met) + acetate + ATP = N(4)-acetylcytidine(34) in elongator tRNA(Met) + AMP + diphosphate. Functionally, catalyzes the formation of N(4)-acetylcytidine (ac(4)C) at the wobble position of elongator tRNA(Met), using acetate and ATP as substrates. First activates an acetate ion to form acetyladenylate (Ac-AMP) and then transfers the acetyl group to tRNA to form ac(4)C34. The polypeptide is tRNA(Met) cytidine acetate ligase (Thermoanaerobacter sp. (strain X514)).